The chain runs to 208 residues: Probable GTP-binding protein EngB (208 aa).

The EngB-type G domain maps to E29–I203. Residues G37–S44, G64–L68, D82–G85, T149–D152, and F182–A184 contribute to the GTP site. Mg(2+) contacts are provided by S44 and T66.

It belongs to the TRAFAC class TrmE-Era-EngA-EngB-Septin-like GTPase superfamily. EngB GTPase family. The cofactor is Mg(2+).

In terms of biological role, necessary for normal cell division and for the maintenance of normal septation. The sequence is that of Probable GTP-binding protein EngB from Alcanivorax borkumensis (strain ATCC 700651 / DSM 11573 / NCIMB 13689 / SK2).